Reading from the N-terminus, the 268-residue chain is Putative S-adenosyl-L-methionine-dependent methyltransferase MAP_0663 (268 aa).

S-adenosyl-L-methionine-binding positions include Asp-124 and 153-154; that span reads DL.

It belongs to the UPF0677 family.

Its function is as follows. Exhibits S-adenosyl-L-methionine-dependent methyltransferase activity. This chain is Putative S-adenosyl-L-methionine-dependent methyltransferase MAP_0663, found in Mycolicibacterium paratuberculosis (strain ATCC BAA-968 / K-10) (Mycobacterium paratuberculosis).